The following is a 716-amino-acid chain: DNA ligase (716 aa).

Residues 50-54 (DAEYD), 99-100 (SL), and Glu132 each bind NAD(+). The active-site N6-AMP-lysine intermediate is Lys134. NAD(+) is bound by residues Arg155, Glu192, Lys308, and Lys332. 4 residues coordinate Zn(2+): Cys437, Cys439, Cys461, and Cys467. Residues 638–716 (KSNSAVAGKT…EDEWLKLIGE (79 aa)) enclose the BRCT domain.

It belongs to the NAD-dependent DNA ligase family. LigA subfamily. Mg(2+) serves as cofactor. Requires Mn(2+) as cofactor.

The enzyme catalyses NAD(+) + (deoxyribonucleotide)n-3'-hydroxyl + 5'-phospho-(deoxyribonucleotide)m = (deoxyribonucleotide)n+m + AMP + beta-nicotinamide D-nucleotide.. In terms of biological role, DNA ligase that catalyzes the formation of phosphodiester linkages between 5'-phosphoryl and 3'-hydroxyl groups in double-stranded DNA using NAD as a coenzyme and as the energy source for the reaction. It is essential for DNA replication and repair of damaged DNA. The protein is DNA ligase of Bradyrhizobium diazoefficiens (strain JCM 10833 / BCRC 13528 / IAM 13628 / NBRC 14792 / USDA 110).